The sequence spans 301 residues: Small ribosomal subunit protein uS2 (301 aa).

The disordered stretch occupies residues 282 to 301; it reads VRKQPVSENENVEAAAAEQK. Low complexity predominate over residues 289 to 301; sequence ENENVEAAAAEQK.

It belongs to the universal ribosomal protein uS2 family.

In Koribacter versatilis (strain Ellin345), this protein is Small ribosomal subunit protein uS2.